Reading from the N-terminus, the 158-residue chain is Snaclec jerdonuxin subunit alpha (158 aa).

An N-terminal signal peptide occupies residues 1 to 23 (MGRFTFVSFGLLVVFLSLSGTGA). 3 disulfides stabilise this stretch: C27–C38, C55–C152, and C127–C144. A C-type lectin domain is found at 34 to 153 (YDRYCYQAFS…CGTENPFVCK (120 aa)).

It belongs to the snaclec family. In terms of assembly, tetramer of 4 heterodimers of alpha and beta subunits; disulfide-linked. Expressed by the venom gland.

It is found in the secreted. Functionally, snaclec that strongly induces platelet aggregation, in a dose-dependent manner. The chain is Snaclec jerdonuxin subunit alpha from Protobothrops jerdonii (Jerdon's pitviper).